Here is a 1058-residue protein sequence, read N- to C-terminus: Bromodomain-containing protein 1 (1058 aa).

The span at methionine 1–alanine 12 shows a compositional bias: basic residues. The tract at residues methionine 1–proline 26 is disordered. Positions leucine 31 to serine 80 are interaction with KAT7/HBO1 and histones. A disordered region spans residues histidine 92–alanine 116. Residue serine 128 is modified to Phosphoserine. The PHD-type 1 zinc finger occupies aspartate 214 to serine 264. A C2HC pre-PHD-type zinc finger spans residues proline 268–valine 301. The PHD-type 2 zinc-finger motif lies at leucine 325–threonine 389. Lysine 368, lysine 516, and lysine 519 each carry N6-acetyllysine. Glycyl lysine isopeptide (Lys-Gly) (interchain with G-Cter in SUMO2) cross-links involve residues lysine 554 and lysine 594. Residues leucine 562 to alanine 666 form the Bromo domain. 2 disordered regions span residues leucine 755–glycine 776 and leucine 791–phenylalanine 868. The residue at position 803 (serine 803) is a Phosphoserine. Low complexity predominate over residues serine 852–serine 867. N6-acetyllysine is present on lysine 903. Arginine 906 carries the phosphoserine modification. The region spanning proline 929–aspartate 1012 is the PWWP domain. A phosphoserine mark is found at serine 1052 and serine 1055.

Component of some HBO1 complex composed of KAT7/HBO1, MEAF6, ING4 and BRD1/BRPF2. Component of the MOZ/MORF complex composed at least of ING5, KAT6A, KAT6B, MEAF6 and one of BRPF1, BRD1/BRPF2 and BRPF3. Interacts (via PHD-type zinc finger domain) with unmodified histone H3. Interacts (via PWWP domain) with dimethylated and trimethylated 'Lys-79' on histone H3. Highly expressed in testis.

It is found in the nucleus. The protein resides in the chromosome. In terms of biological role, scaffold subunit of various histone acetyltransferase (HAT) complexes, such as the MOZ/MORF and HBO1 complexes, that acts as a regulator of hematopoiesis. Plays a key role in HBO1 complex by directing KAT7/HBO1 specificity towards histone H3 'Lys-14' acetylation (H3K14ac), thereby promoting erythroid differentiation. The protein is Bromodomain-containing protein 1 of Homo sapiens (Human).